The primary structure comprises 41 residues: Putative toxic protein TimP (41 aa).

A membrane pass occupies residues 1-17 (MKIRCFCIVLIVSGALL).

It belongs to the TimP toxin family.

It localises to the cell inner membrane. Putative toxic component of a potential type I toxin-antitoxin (TA) system. Neutralized by sRNA antitoxin TimR which binds to the 5' UTR of timP mRNA and inhibits translation. The antitoxin gene is encoded immediately upstream and transcribed divergently from the toxin gene; antitoxin RNA is less stable than timP mRNA. In Escherichia coli (strain K12), this protein is Putative toxic protein TimP.